The primary structure comprises 598 residues: Elongation factor 4 (598 aa).

In terms of domain architecture, tr-type G spans 4–185; that stretch reads KNIRNFSIIA…TIITKIPAPK (182 aa). Residues 16-21 and 132-135 each bind GTP; these read DHGKST and NKID.

It belongs to the TRAFAC class translation factor GTPase superfamily. Classic translation factor GTPase family. LepA subfamily.

It is found in the cell inner membrane. The catalysed reaction is GTP + H2O = GDP + phosphate + H(+). Functionally, required for accurate and efficient protein synthesis under certain stress conditions. May act as a fidelity factor of the translation reaction, by catalyzing a one-codon backward translocation of tRNAs on improperly translocated ribosomes. Back-translocation proceeds from a post-translocation (POST) complex to a pre-translocation (PRE) complex, thus giving elongation factor G a second chance to translocate the tRNAs correctly. Binds to ribosomes in a GTP-dependent manner. This is Elongation factor 4 from Campylobacter jejuni subsp. jejuni serotype O:2 (strain ATCC 700819 / NCTC 11168).